Consider the following 351-residue polypeptide: Protein-glutamate methylesterase/protein-glutamine glutaminase (351 aa).

Residues 8-125 (TVVVVDDSLT…GEDPFAGLGD (118 aa)) form the Response regulatory domain. Asp59 carries the post-translational modification 4-aspartylphosphate. Residues 151-345 (PKIGTVVGIG…PAILNLCERR (195 aa)) form the CheB-type methylesterase domain. Catalysis depends on residues Ser162, His188, and Asp287.

Belongs to the CheB family. In terms of processing, phosphorylated by CheA. Phosphorylation of the N-terminal regulatory domain activates the methylesterase activity.

The protein resides in the cytoplasm. It carries out the reaction [protein]-L-glutamate 5-O-methyl ester + H2O = L-glutamyl-[protein] + methanol + H(+). It catalyses the reaction L-glutaminyl-[protein] + H2O = L-glutamyl-[protein] + NH4(+). Functionally, involved in chemotaxis. Part of a chemotaxis signal transduction system that modulates chemotaxis in response to various stimuli. Catalyzes the demethylation of specific methylglutamate residues introduced into the chemoreceptors (methyl-accepting chemotaxis proteins or MCP) by CheR. Also mediates the irreversible deamidation of specific glutamine residues to glutamic acid. In Gluconobacter oxydans (strain 621H) (Gluconobacter suboxydans), this protein is Protein-glutamate methylesterase/protein-glutamine glutaminase.